The chain runs to 425 residues: 5-nitroanthranilic acid aminohydrolase (425 aa).

Asp88 is an active-site residue. Catalysis depends on Glu158, which acts as the Proton acceptor.

Belongs to the peptidase M20A family. It depends on Co(2+) as a cofactor. Mn(2+) is required as a cofactor. Zn(2+) serves as cofactor. Requires Fe(2+) as cofactor. The cofactor is Ni(2+).

It catalyses the reaction 5-nitroanthranilate + H2O + H(+) = 5-nitrosalicylate + NH4(+). Its function is as follows. Catalyzes the deamination of 5-nitroanthranilate (5NAA) to 5-nitrosalicylate (5NSA), the first step in biodegradation of 5-nitroanthranilate. The protein is 5-nitroanthranilic acid aminohydrolase (naaA) of Bradyrhizobium sp.